The sequence spans 549 residues: Leiomodin-2 (549 aa).

Residues 1–42 are tropomyosin-binding; it reads MSTFGYRRGLSKYESIDEDELLASLTAEELKELERELEDIEP. The interval 1-47 is interaction with tropomyosin alpha; sequence MSTFGYRRGLSKYESIDEDELLASLTAEELKELERELEDIEPDRNLP. 3 interaction with actin regions span residues 1 to 164, 165 to 499, and 523 to 542; these read MSTF…PDNS, KPKT…KEIK, and AHEN…LRRV. A phosphoserine mark is found at Ser-11, Ser-15, and Ser-24. Disordered stretches follow at residues 91–166, 179–200, 358–455, and 469–534; these read KLAE…NSKP, TNGN…HPCG, MDKQ…PGKK, and ESAQ…IRGS. 2 stretches are compositionally biased toward acidic residues: residues 95-105 and 113-143; these read EDKEESEEELI and VSEE…EEVT. Polar residues-rich tracts occupy residues 150 to 163 and 179 to 192; these read INGT…NPDN and TNGN…NTES. A compositionally biased stretch (basic and acidic residues) spans 358–376; the sequence is MDKQRQKRMQEQKQQEGHD. The segment covering 390-401 has biased composition (polar residues); sequence TPGSSPYASPRQ. Ser-406 carries the phosphoserine modification. Residues 420 to 452 are compositionally biased toward pro residues; sequence PPSPVAPPPPPPPPPLPPHMLPPPPPPPAPPLP. The stretch at 457–515 forms a coiled coil; that stretch reads ITRNIAEVIKQQESAQRALQNGQRKKKGKKVKKQPNNILKEIKNSLRSVQEKKMEESSR. Residues 469-478 are compositionally biased toward polar residues; that stretch reads ESAQRALQNG. A compositionally biased stretch (basic residues) spans 479–489; it reads QRKKKGKKVKK. Over residues 496-514 the composition is skewed to basic and acidic residues; that stretch reads KEIKNSLRSVQEKKMEESS. One can recognise a WH2 domain in the interval 523–542; that stretch reads AHENLMEAIRGSSIRQLRRV.

This sequence belongs to the tropomodulin family. Can bind at least three actin monomers and thereby provides a nucleus for actin filament formation. Interacts (via N-terminus) with tropomyosin alpha (TPM1) (via N-terminus). May also interact with TPM2 (via N-terminus). Interacts with FLII.

Its subcellular location is the cytoplasm. It is found in the myofibril. It localises to the sarcomere. The protein localises to the m line. The protein resides in the cytoskeleton. Mediates nucleation of actin filaments and thereby promotes actin polymerization. Plays a role in the regulation of actin filament length. Required for normal sarcomere organization in the heart, and for normal heart function. This is Leiomodin-2 (Lmod2) from Rattus norvegicus (Rat).